The chain runs to 258 residues: Polysialic acid transport protein KpsM (258 aa).

An ABC transmembrane type-2 domain is found at 30–251 (LGYLWAILEP…FIGLALYRTR (222 aa)). 6 helical membrane passes run 33-53 (LWAI…FGYI), 61-81 (ISFP…SSIS), 110-130 (ALLE…IVWM), 144-164 (VLTW…FMVV), 175-195 (LPIL…LHSI), and 227-247 (GVSL…GLAL).

Belongs to the ABC-2 integral membrane protein family.

The protein localises to the cell inner membrane. Functionally, kpsM and KpsT constitute a system for the transport of polysialic acid across the cytoplasmic membrane. This is Polysialic acid transport protein KpsM (kpsM) from Escherichia coli.